Reading from the N-terminus, the 344-residue chain is L-rhamnose-proton symporter (344 aa).

Transmembrane regions (helical) follow at residues 4-24 (AITMGIFWHLIGAASAACFYA), 38-58 (WSVGGIVSWIILPWTISALLL), 68-88 (FSLSTLLPVFLFGAMWGIGNI), 101-121 (MGIGIAIGITLIVGTLMTPII), 137-157 (TLLGVLVALIGVGIVTRAGQL), 175-195 (LVLAVMCGIFSAGMSFAMNAA), 214-234 (LPSYVVIMGGGAIINLGFCFI), 259-279 (VLLSALGGLMWYLQFFFYAWG), 290-310 (ISWMLHMSFYVLCGGIVGLVL), and 323-343 (VLSLGCVVIIVAANIVGIGMA).

This sequence belongs to the L-rhamnose transporter (TC 2.A.7.6) family.

Its subcellular location is the cell inner membrane. It carries out the reaction L-rhamnopyranose(in) + H(+)(in) = L-rhamnopyranose(out) + H(+)(out). Its function is as follows. Uptake of L-rhamnose across the cytoplasmic membrane with the concomitant transport of protons into the cell (symport system). The sequence is that of L-rhamnose-proton symporter from Shigella sonnei (strain Ss046).